Consider the following 1544-residue polypeptide: Protein mahjong (1544 aa).

The tract at residues 1 to 110 is disordered; sequence MSEGSGSENA…AAADRRQATK (110 aa). Residues 10–35 show a composition bias toward low complexity; that stretch reads AAAAEAAAEAEAATEAALMAEAVAVA. Positions 38 to 91 are enriched in acidic residues; the sequence is SDEEEQPEAEDMPEQAGDNQEEDAAEQQDGGEPEADEDADADDAMSVENAENES. S565 and S569 each carry phosphoserine. Positions 912-944 constitute a LisH domain; sequence NKQQLYQLIFEHLESNGLSQTAQMLQREVGLPL. 2 disordered regions span residues 946–973 and 987–1059; these read TPTTRSFHQSPFDYKSLPSGSSSLSRNR and GNGD…LAED. S955 carries the post-translational modification Phosphoserine. The span at 961–971 shows a compositional bias: low complexity; that stretch reads SLPSGSSSLSR. A compositionally biased stretch (polar residues) spans 1016 to 1027; sequence PNFSSLNTTQTP. Short sequence motifs (DWD box) lie at residues 1302-1309 and 1338-1345; these read VLWDVRSG and EVWDLRTF. Disordered stretches follow at residues 1447–1475 and 1487–1544; these read KSERSEEEDDEEVPESDEDGSDTGSENTF and LRNL…SSDD. 2 stretches are compositionally biased toward acidic residues: residues 1451–1467 and 1495–1535; these read SEEEDDEEVPESDEDGS and NDDE…DVLE.

It belongs to the VPRBP/DCAF1 family. Component of the CUL4-RBX1-DDB1-DCAF1 E3 ubiquitin-protein ligase complex. Interacts with l(2)gl.

The protein localises to the nucleus. Its pathway is protein modification; protein ubiquitination. In terms of biological role, probable substrate recognition component of tsome E3 ubiquitin-protein ligase complex. Plays a key role in cell competition via its interaction with l(2)gl. The sequence is that of Protein mahjong (mahj) from Drosophila melanogaster (Fruit fly).